Consider the following 131-residue polypeptide: UPF0102 protein YraN (131 aa).

Belongs to the UPF0102 family.

In Salmonella arizonae (strain ATCC BAA-731 / CDC346-86 / RSK2980), this protein is UPF0102 protein YraN.